Here is a 501-residue protein sequence, read N- to C-terminus: Lysine--tRNA ligase (501 aa).

The Mg(2+) site is built by Glu-402 and Glu-409.

It belongs to the class-II aminoacyl-tRNA synthetase family. As to quaternary structure, homodimer. Mg(2+) is required as a cofactor.

The protein localises to the cytoplasm. The catalysed reaction is tRNA(Lys) + L-lysine + ATP = L-lysyl-tRNA(Lys) + AMP + diphosphate. In Helicobacter pylori (strain G27), this protein is Lysine--tRNA ligase.